A 436-amino-acid polypeptide reads, in one-letter code: MEPYDDAVVEEHEEQEEERTEEKIINEEYKTWKKNAPFLYDMILSTALEWPTLTTQWLPDKQEVPDKPYSTHRLLIGTHTSSDAQNYLQIAHVQLPNPSAPNPDDYDEERGEIGGYGGSSKKAPMEIKFNIVQKIDHKGEVNKARYQPQNPNIIATMCTDGRVMVWDRSKHPSLPTGQVNPQMELIGHTKEGFGLSWSPHTAGQLATGSEDKTVRIWDLTTYSKGNKLLKPSRTYTHHSSIVNDVQYHPLHSSLIGTVSDDITLQILDIRESETTRAAASTEGQHRDAINAIAFNPAAETVLATGSADKTIGLWDLRNLKTKLHSLESHTDSVTSISWHPFEEAVLASASYDRKIAFWDLSRAGEEQTPEDAQDGPPELLFQHGGHTNRISDFSWNLNDPWVLCSAAEDNLLQVWKVADAIVGKDLEDVPTEELEP.

WD repeat units lie at residues 136-176, 187-227, 237-277, 284-324, and 328-368; these read DHKG…SLPT, GHTK…KGNK, HHSS…TTRA, QHRD…TKLH, and SHTD…EEQT. An interaction with the histone H4 N-terminus region spans residues 370–374; the sequence is EDAQD. Residues 385 to 425 form a WD 6 repeat; the sequence is GHTNRISDFSWNLNDPWVLCSAAEDNLLQVWKVADAIVGKD.

This sequence belongs to the WD repeat RBAP46/RBAP48/MSI1 family. As to quaternary structure, component of the HAT-B complex composed of at least hat1 and hat2. The HAT-B complex binds to histone H4 tail.

It localises to the cytoplasm. It is found in the nucleus. Its function is as follows. Regulatory subunit of the histone acetylase B (HAT-B) complex. The complex acetylates 'Lys-12' of histone H4 which is required for telomeric silencing. The polypeptide is Histone acetyltransferase type B subunit 2 (hat2) (Aspergillus fumigatus (strain ATCC MYA-4609 / CBS 101355 / FGSC A1100 / Af293) (Neosartorya fumigata)).